The following is a 431-amino-acid chain: Glutamate-1-semialdehyde 2,1-aminomutase 2 (431 aa).

Lys268 carries the N6-(pyridoxal phosphate)lysine modification.

Belongs to the class-III pyridoxal-phosphate-dependent aminotransferase family. HemL subfamily. Homodimer. Requires pyridoxal 5'-phosphate as cofactor.

Its subcellular location is the cytoplasm. It carries out the reaction (S)-4-amino-5-oxopentanoate = 5-aminolevulinate. The protein operates within porphyrin-containing compound metabolism; protoporphyrin-IX biosynthesis; 5-aminolevulinate from L-glutamyl-tRNA(Glu): step 2/2. In Bacillus licheniformis (strain ATCC 14580 / DSM 13 / JCM 2505 / CCUG 7422 / NBRC 12200 / NCIMB 9375 / NCTC 10341 / NRRL NRS-1264 / Gibson 46), this protein is Glutamate-1-semialdehyde 2,1-aminomutase 2.